Here is a 119-residue protein sequence, read N- to C-terminus: Fluoride-specific ion channel FluC (119 aa).

4 helical membrane passes run 5–25 (IIPL…LNLA), 30–50 (IPPA…IGIF), 59–79 (WKLL…GFSL), and 97–117 (IFLH…IGAA). Positions 69 and 72 each coordinate Na(+).

It belongs to the fluoride channel Fluc/FEX (TC 1.A.43) family.

It localises to the cell inner membrane. The enzyme catalyses fluoride(in) = fluoride(out). With respect to regulation, na(+) is not transported, but it plays an essential structural role and its presence is essential for fluoride channel function. Its function is as follows. Fluoride-specific ion channel. Important for reducing fluoride concentration in the cell, thus reducing its toxicity. The sequence is that of Fluoride-specific ion channel FluC from Neisseria meningitidis serogroup B (strain ATCC BAA-335 / MC58).